A 346-amino-acid polypeptide reads, in one-letter code: E3 ubiquitin-protein ligase MARCHF9 (346 aa).

Disordered regions lie at residues Gly20–Gly39 and Ser47–Leu92. Residues Pro63–Arg75 show a composition bias toward basic and acidic residues. Positions Gly77–Gly90 are enriched in pro residues. An RING-CH-type zinc finger spans residues Asp102 to Leu162. 8 residues coordinate Zn(2+): Cys110, Cys113, Cys126, Cys128, His136, Cys139, Cys152, and Cys155. A run of 2 helical transmembrane segments spans residues Ile185–Ser205 and Leu219–Ile239. Disordered regions lie at residues Asp273–Ala301 and Pro326–Val346. Polar residues predominate over residues Pro284 to Thr296.

In terms of assembly, homodimer. In terms of tissue distribution, ubiquitously expressed.

It is found in the golgi apparatus membrane. Its subcellular location is the lysosome membrane. The enzyme catalyses S-ubiquitinyl-[E2 ubiquitin-conjugating enzyme]-L-cysteine + [acceptor protein]-L-lysine = [E2 ubiquitin-conjugating enzyme]-L-cysteine + N(6)-ubiquitinyl-[acceptor protein]-L-lysine.. Its pathway is protein modification; protein ubiquitination. Functionally, E3 ubiquitin-protein ligase that may mediate ubiquitination of MHC-I, CD4 and ICAM1, and promote their subsequent endocytosis and sorting to lysosomes via multivesicular bodies. E3 ubiquitin ligases accept ubiquitin from an E2 ubiquitin-conjugating enzyme in the form of a thioester and then directly transfer the ubiquitin to targeted substrates. The chain is E3 ubiquitin-protein ligase MARCHF9 from Homo sapiens (Human).